Here is a 263-residue protein sequence, read N- to C-terminus: L-aspartate dehydrogenase (263 aa).

Residues Ala-120 and Asn-186 each coordinate NAD(+). His-216 is an active-site residue.

The protein belongs to the L-aspartate dehydrogenase family.

It carries out the reaction L-aspartate + NADP(+) + H2O = oxaloacetate + NH4(+) + NADPH + H(+). The catalysed reaction is L-aspartate + NAD(+) + H2O = oxaloacetate + NH4(+) + NADH + H(+). The protein operates within cofactor biosynthesis; NAD(+) biosynthesis; iminoaspartate from L-aspartate (dehydrogenase route): step 1/1. Functionally, specifically catalyzes the NAD or NADP-dependent dehydrogenation of L-aspartate to iminoaspartate. The sequence is that of L-aspartate dehydrogenase from Psychrobacter cryohalolentis (strain ATCC BAA-1226 / DSM 17306 / VKM B-2378 / K5).